An 81-amino-acid polypeptide reads, in one-letter code: Cortexin-2 (81 aa).

The chain crosses the membrane as a helical span at residues 29 to 49 (TGFAFVGILCIFLGLLIIRCF).

The protein belongs to the cortexin family.

It localises to the membrane. In Homo sapiens (Human), this protein is Cortexin-2 (CTXN2).